A 342-amino-acid chain; its full sequence is L-threonine 3-dehydrogenase (342 aa).

Position 38 (cysteine 38) interacts with Zn(2+). Catalysis depends on charge relay system residues threonine 40 and histidine 43. The Zn(2+) site is built by histidine 63, glutamate 64, cysteine 93, cysteine 96, cysteine 99, and cysteine 107. NAD(+) contacts are provided by residues isoleucine 175, aspartate 195, arginine 200, 262–264 (LGI), and 286–287 (IY).

This sequence belongs to the zinc-containing alcohol dehydrogenase family. In terms of assembly, homotetramer. It depends on Zn(2+) as a cofactor.

The protein localises to the cytoplasm. The catalysed reaction is L-threonine + NAD(+) = (2S)-2-amino-3-oxobutanoate + NADH + H(+). It participates in amino-acid degradation; L-threonine degradation via oxydo-reductase pathway; glycine from L-threonine: step 1/2. Functionally, catalyzes the NAD(+)-dependent oxidation of L-threonine to 2-amino-3-ketobutyrate. This Paraburkholderia phymatum (strain DSM 17167 / CIP 108236 / LMG 21445 / STM815) (Burkholderia phymatum) protein is L-threonine 3-dehydrogenase.